A 313-amino-acid chain; its full sequence is Isoaspartyl peptidase (313 aa).

Residue Thr-179 is the Nucleophile of the active site. Substrate is bound by residues 207–210 (RVGD) and 230–233 (TGTG).

The protein belongs to the Ntn-hydrolase family. Heterotetramer of two alpha and two beta chains arranged as a dimer of alpha/beta heterodimers. In terms of processing, autocleaved. Generates the alpha and beta subunits. The beta subunit is thought to be responsible for the nucleophile hydrolase activity.

The enzyme catalyses Cleavage of a beta-linked Asp residue from the N-terminus of a polypeptide.. In terms of biological role, degrades proteins damaged by L-isoaspartyl residue formation (also known as beta-Asp residues). Degrades L-isoaspartyl-containing di- and tripeptides. Acts best on iso-Asp-Leu, followed by iso-Asp-Ala, -His and to a lesser extent iso-Asp-Lys, -Phe and iso-Asp-Leu-Ala. Does not act on internal iso-Asp bonds (Als-iso-Asp-Leu-Ala). Does not act on alpha-Asp bonds. Has poor L-asparaginase activity. The polypeptide is Isoaspartyl peptidase (iaaA) (Salmonella typhimurium (strain LT2 / SGSC1412 / ATCC 700720)).